A 144-amino-acid chain; its full sequence is Deoxyuridine 5'-triphosphate nucleotidohydrolase (144 aa).

The dUMP site is built by serine 66, arginine 133, phenylalanine 138, and glycine 139.

This sequence belongs to the dUTPase family. As to quaternary structure, homotrimer. It depends on Mg(2+) as a cofactor.

It carries out the reaction dUTP + H2O = dUMP + diphosphate + H(+). The protein operates within pyrimidine metabolism; dUMP biosynthesis; dUMP from dCTP (dUTP route): step 2/2. Involved in nucleotide metabolism via production of dUMP, the immediate precursor of thymidine nucleotides, and decreases the intracellular concentration of dUTP so that uracil cannot be incorporated into DNA. The chain is Deoxyuridine 5'-triphosphate nucleotidohydrolase (DUT1) from Encephalitozoon cuniculi (strain GB-M1) (Microsporidian parasite).